We begin with the raw amino-acid sequence, 87 residues long: NADH dehydrogenase [ubiquinone] 1 alpha subcomplex subunit 4-like 2 (87 aa).

It belongs to the complex I NDUFA4 subunit family.

This Mus musculus (Mouse) protein is NADH dehydrogenase [ubiquinone] 1 alpha subcomplex subunit 4-like 2 (Ndufa4l2).